The following is an 861-amino-acid chain: Extra-large guanine nucleotide-binding protein 2 (861 aa).

Disordered regions lie at residues 1-32 (MAAVIRKLLPFPSPNPKRDNRESDDDDETSSG) and 121-168 (VSGS…DDRV). The span at 131–143 (KRLDVPEEVKSPA) shows a compositional bias: basic and acidic residues. Low complexity predominate over residues 146 to 156 (RLSPSSPLSAS). The span at 157–168 (AREEDHLDDDRV) shows a compositional bias: basic and acidic residues. Residues 204 to 211 (RAERKGKR) carry the Nuclear localization signal motif. The RING-type; degenerate zinc finger occupies 214–257 (CYRCQLGNRFTEKEVCIVCDAKYCFNCVRRAMGAMPEGRKCQAC). In terms of domain architecture, G-alpha spans 461–853 (MLNKLLLIGS…TSMFQEMSTT (393 aa)). A G1 motif region spans residues 464-477 (KLLLIGSEKGGATT). Residue 469 to 477 (GSEKGGATT) coordinates GTP. T476 serves as a coordination point for Ca(2+). The segment at 523-545 (EMSNDQSSGNVGDETSAKPGNSI) is disordered. 624–632 (DILQAEGLS) provides a ligand contact to GTP. Residues 624–632 (DILQAEGLS) form a G2 motif region. Position 632 (S632) interacts with Ca(2+). Residues 665-674 (YQLIRLNPRS) form a G3 motif region. The tract at residues 737-744 (LLVLTKFD) is G4 motif. A GTP-binding site is contributed by 741–744 (TKFD). The G5 motif stretch occupies residues 818-823 (QVSLES).

Belongs to the G-alpha family. XLG subfamily. As to quaternary structure, interacts with GB1. Component of a G-protein complex at least composed of XLG2 and GB1. Interacts with RTV1. Requires Ca(2+) as cofactor. Ubiquitous. Strongly expressed in vascular tissues, root and shoot meristems and lateral root primordia.

It localises to the nucleus. In terms of biological role, guanine nucleotide-binding proteins (G proteins) are involved as modulators or transducers in various transmembrane signaling systems. Binds GTP with specificity. Plays a role in the root morphogenesis by regulation of the cell proliferation. Acts as a positive regulator in resistance to pathogen that triggers the salicylic acid (SA) pathway. Promotes the DNA binding activity of RTV1 specifically to promoter regions of FT and SOC1 in vivo leading to the activation of floral integrator genes. The chain is Extra-large guanine nucleotide-binding protein 2 (XLG2) from Arabidopsis thaliana (Mouse-ear cress).